We begin with the raw amino-acid sequence, 183 residues long: Bifunctional protein PyrR (183 aa).

A PRPP-binding motif is present at residues 100–112; that stretch reads VILVDDVLYTGRT.

Belongs to the purine/pyrimidine phosphoribosyltransferase family. PyrR subfamily.

It catalyses the reaction UMP + diphosphate = 5-phospho-alpha-D-ribose 1-diphosphate + uracil. Its function is as follows. Regulates the transcription of the pyrimidine nucleotide (pyr) operon in response to exogenous pyrimidines. In terms of biological role, also displays a weak uracil phosphoribosyltransferase activity which is not physiologically significant. This chain is Bifunctional protein PyrR, found in Deinococcus deserti (strain DSM 17065 / CIP 109153 / LMG 22923 / VCD115).